Consider the following 894-residue polypeptide: Mitogen-activated protein kinase kinase kinase kinase 3 (894 aa).

Met-1 carries the N-acetylmethionine modification. The region spanning 16-273 (FELIQRIGSG…AEKLLQHPFV (258 aa)) is the Protein kinase domain. ATP-binding positions include 22 to 30 (IGSGTYGDV) and Lys-45. Asp-136 acts as the Proton acceptor in catalysis. At Ser-329 the chain carries Phosphoserine. The interval 339-358 (DPPLRKETEPHHELPDSDGF) is disordered. A compositionally biased stretch (basic and acidic residues) spans 340-353 (PPLRKETEPHHELP). Residue Ser-398 is modified to Phosphoserine. The disordered stretch occupies residues 408–537 (HVAHLEDDEG…VPKPISNGLP (130 aa)). A compositionally biased stretch (pro residues) spans 473 to 487 (HVPPRPPPPRLPPQK). Positions 508–520 (LYQQQSEQRGTNL) are enriched in polar residues. The CNH domain occupies 556-867 (PLKIHCATSW…IFRLLGSDRV (312 aa)).

This sequence belongs to the protein kinase superfamily. STE Ser/Thr protein kinase family. STE20 subfamily. In terms of assembly, interacts with SH3GL2. Interaction appears to regulate MAP4K3-mediated JNK activation. Mg(2+) is required as a cofactor.

The enzyme catalyses L-seryl-[protein] + ATP = O-phospho-L-seryl-[protein] + ADP + H(+). The catalysed reaction is L-threonyl-[protein] + ATP = O-phospho-L-threonyl-[protein] + ADP + H(+). Serine/threonine kinase that plays a role in the response to environmental stress. Appears to act upstream of the JUN N-terminal pathway. Activator of the Hippo signaling pathway which plays a pivotal role in organ size control and tumor suppression by restricting proliferation and promoting apoptosis. MAP4Ks act in parallel to and are partially redundant with STK3/MST2 and STK4/MST2 in the phosphorylation and activation of LATS1/2, and establish MAP4Ks as components of the expanded Hippo pathway. The chain is Mitogen-activated protein kinase kinase kinase kinase 3 (Map4k3) from Mus musculus (Mouse).